The following is a 132-amino-acid chain: MKFIIAFFVATLAVMTVSGEDKKHDYQNEFDFLLMERIHEQIKKGELALFYLQEQINHFEEKPTKEMKDKIVAEMDTIIAMIDGVRGVLDRLMQRKDLDIFEQYNLEMAKKSGDILERDLKKEEARVKKIEV.

Immunodominant conformational IgE-binding epitope regions lie at residues D25–Q53 and E102–V132.

This sequence belongs to the mite group 5 allergen family. As to quaternary structure, monomer. Trimer of homodimers. Oligomerizes in a concentration-dependent manner.

The polypeptide is Mite allergen Der p 5 (DERP5) (Dermatophagoides pteronyssinus (European house dust mite)).